Reading from the N-terminus, the 682-residue chain is DNA-directed RNA polymerase subunit beta' (682 aa).

Positions 69, 71, 87, and 90 each coordinate Zn(2+). Residues Asp489, Asp491, and Asp493 each contribute to the Mg(2+) site.

This sequence belongs to the RNA polymerase beta' chain family. RpoC1 subfamily. In plastids the minimal PEP RNA polymerase catalytic core is composed of four subunits: alpha, beta, beta', and beta''. When a (nuclear-encoded) sigma factor is associated with the core the holoenzyme is formed, which can initiate transcription. Requires Mg(2+) as cofactor. It depends on Zn(2+) as a cofactor.

Its subcellular location is the plastid. It is found in the chloroplast. It catalyses the reaction RNA(n) + a ribonucleoside 5'-triphosphate = RNA(n+1) + diphosphate. In terms of biological role, DNA-dependent RNA polymerase catalyzes the transcription of DNA into RNA using the four ribonucleoside triphosphates as substrates. The chain is DNA-directed RNA polymerase subunit beta' from Oryza nivara (Indian wild rice).